We begin with the raw amino-acid sequence, 252 residues long: Imidazole glycerol phosphate synthase subunit HisF (252 aa).

Active-site residues include aspartate 11 and aspartate 130.

The protein belongs to the HisA/HisF family. In terms of assembly, heterodimer of HisH and HisF.

The protein localises to the cytoplasm. The enzyme catalyses 5-[(5-phospho-1-deoxy-D-ribulos-1-ylimino)methylamino]-1-(5-phospho-beta-D-ribosyl)imidazole-4-carboxamide + L-glutamine = D-erythro-1-(imidazol-4-yl)glycerol 3-phosphate + 5-amino-1-(5-phospho-beta-D-ribosyl)imidazole-4-carboxamide + L-glutamate + H(+). Its pathway is amino-acid biosynthesis; L-histidine biosynthesis; L-histidine from 5-phospho-alpha-D-ribose 1-diphosphate: step 5/9. In terms of biological role, IGPS catalyzes the conversion of PRFAR and glutamine to IGP, AICAR and glutamate. The HisF subunit catalyzes the cyclization activity that produces IGP and AICAR from PRFAR using the ammonia provided by the HisH subunit. This is Imidazole glycerol phosphate synthase subunit HisF from Polynucleobacter asymbioticus (strain DSM 18221 / CIP 109841 / QLW-P1DMWA-1) (Polynucleobacter necessarius subsp. asymbioticus).